Consider the following 81-residue polypeptide: Small ribosomal subunit protein uS17 (81 aa).

This sequence belongs to the universal ribosomal protein uS17 family. In terms of assembly, part of the 30S ribosomal subunit.

One of the primary rRNA binding proteins, it binds specifically to the 5'-end of 16S ribosomal RNA. The sequence is that of Small ribosomal subunit protein uS17 from Hyphomonas neptunium (strain ATCC 15444).